The following is an 869-amino-acid chain: Probable beta-glucosidase F (869 aa).

The first 19 residues, 1-19 (MRVLSAIALVASLASSALS), serve as a signal peptide directing secretion. Residues N77 and N261 are each glycosylated (N-linked (GlcNAc...) asparagine). Residue D289 is part of the active site. N332, N364, N399, and N478 each carry an N-linked (GlcNAc...) asparagine glycan. Positions 677–697 (STYPPTRPPKGPTPTYPTAIP) are disordered. Positions 681 to 691 (PTRPPKGPTPT) are enriched in pro residues. N728 is a glycosylation site (N-linked (GlcNAc...) asparagine).

Belongs to the glycosyl hydrolase 3 family.

Its subcellular location is the secreted. The catalysed reaction is Hydrolysis of terminal, non-reducing beta-D-glucosyl residues with release of beta-D-glucose.. It participates in glycan metabolism; cellulose degradation. Beta-glucosidases are one of a number of cellulolytic enzymes involved in the degradation of cellulosic biomass. Catalyzes the last step releasing glucose from the inhibitory cellobiose. The sequence is that of Probable beta-glucosidase F (bglF) from Aspergillus fumigatus (strain CBS 144.89 / FGSC A1163 / CEA10) (Neosartorya fumigata).